Consider the following 139-residue polypeptide: uncharacterized protein (139 aa).

This is an uncharacterized protein from Saccharomyces cerevisiae (strain ATCC 204508 / S288c) (Baker's yeast).